We begin with the raw amino-acid sequence, 158 residues long: Cyclic pyranopterin monophosphate synthase (158 aa).

Substrate contacts are provided by residues 73-75 and 110-111; these read LCH and ME. Aspartate 125 is an active-site residue.

It belongs to the MoaC family. Homohexamer; trimer of dimers.

The enzyme catalyses (8S)-3',8-cyclo-7,8-dihydroguanosine 5'-triphosphate = cyclic pyranopterin phosphate + diphosphate. It functions in the pathway cofactor biosynthesis; molybdopterin biosynthesis. Its function is as follows. Catalyzes the conversion of (8S)-3',8-cyclo-7,8-dihydroguanosine 5'-triphosphate to cyclic pyranopterin monophosphate (cPMP). This Azotobacter vinelandii (strain DJ / ATCC BAA-1303) protein is Cyclic pyranopterin monophosphate synthase.